The sequence spans 120 residues: Ribosome-binding factor A (120 aa).

This sequence belongs to the RbfA family. Monomer. Binds 30S ribosomal subunits, but not 50S ribosomal subunits or 70S ribosomes.

It localises to the cytoplasm. Its function is as follows. One of several proteins that assist in the late maturation steps of the functional core of the 30S ribosomal subunit. Associates with free 30S ribosomal subunits (but not with 30S subunits that are part of 70S ribosomes or polysomes). Required for efficient processing of 16S rRNA. May interact with the 5'-terminal helix region of 16S rRNA. The protein is Ribosome-binding factor A of Rickettsia conorii (strain ATCC VR-613 / Malish 7).